A 325-amino-acid polypeptide reads, in one-letter code: 5-dehydro-2-deoxygluconokinase (325 aa).

Belongs to the carbohydrate kinase PfkB family.

It catalyses the reaction 5-dehydro-2-deoxy-D-gluconate + ATP = 6-phospho-5-dehydro-2-deoxy-D-gluconate + ADP + H(+). It participates in polyol metabolism; myo-inositol degradation into acetyl-CoA; acetyl-CoA from myo-inositol: step 5/7. Catalyzes the phosphorylation of 5-dehydro-2-deoxy-D-gluconate (2-deoxy-5-keto-D-gluconate or DKG) to 6-phospho-5-dehydro-2-deoxy-D-gluconate (DKGP). This Bacillus subtilis (strain 168) protein is 5-dehydro-2-deoxygluconokinase (iolC).